A 464-amino-acid polypeptide reads, in one-letter code: Antithrombin-III (464 aa).

The first 32 residues, 1 to 32 (MYSNVIGTVTSGKRKVYLLSLLLIGFWDCVTC), serve as a signal peptide directing secretion. Disulfide bonds link Cys-40–Cys-160 and Cys-53–Cys-127. Thr-63 is modified (phosphothreonine; by FAM20C). At Ser-68 the chain carries Phosphoserine; by FAM20C. Trp-81 contacts heparin. Asn-128 carries N-linked (GlcNAc...) asparagine glycosylation. Arg-161 contacts heparin. The N-linked (GlcNAc...) asparagine glycan is linked to Asn-167. Heparin is bound at residue Arg-177. The N-linked (GlcNAc...) (complex) asparagine glycan is linked to Asn-187. N-linked (GlcNAc...) asparagine glycosylation occurs at Asn-224. Cys-279 and Cys-462 are oxidised to a cystine.

This sequence belongs to the serpin family. As to quaternary structure, forms protease inhibiting heterodimer with TMPRSS7. In terms of processing, phosphorylated by FAM20C in the extracellular medium. As to expression, found in plasma.

The protein resides in the secreted. The protein localises to the extracellular space. Functionally, most important serine protease inhibitor in plasma that regulates the blood coagulation cascade. AT-III inhibits thrombin, matriptase-3/TMPRSS7, as well as factors IXa, Xa and XIa. Its inhibitory activity is greatly enhanced in the presence of heparin. In Homo sapiens (Human), this protein is Antithrombin-III (SERPINC1).